The following is a 616-amino-acid chain: Chaperone protein HscA (616 aa).

The protein belongs to the heat shock protein 70 family.

Chaperone involved in the maturation of iron-sulfur cluster-containing proteins. Has a low intrinsic ATPase activity which is markedly stimulated by HscB. Involved in the maturation of IscU. The protein is Chaperone protein HscA of Proteus mirabilis (strain HI4320).